The primary structure comprises 385 residues: Non-structural maintenance of chromosomes element 4 homolog A (385 aa).

Positions 1 to 69 (MSGDSSGRGP…PSDSGDEMMD (69 aa)) are disordered. Basic and acidic residues-rich tracts occupy residues 10–21 (PEGRGRGRDPHR) and 42–55 (SARE…RPSL). Positions 56–68 (EDTEPSDSGDEMM) are enriched in acidic residues. Phosphothreonine is present on Thr345. Ser377 is subject to Phosphoserine.

Belongs to the NSE4 family. Component of the SMC5-SMC6 complex which consists at least of SMC5, SMC6, NSMCE2, NSMCE1, NSMCE4A or EID3 and NSMCE3. NSMCE1, NSMCE4A or EID3 and NSMCE3 probably form a subcomplex that bridges the head domains of the SMC5:SMC6 heterodimer. Interacts with NSMCE3.

The protein localises to the nucleus. The protein resides in the chromosome. It is found in the telomere. Component of the SMC5-SMC6 complex, a complex involved in DNA double-strand breaks by homologous recombination. The complex may promote sister chromatid homologous recombination by recruiting the SMC1-SMC3 cohesin complex to double-strand breaks. The complex is required for telomere maintenance via recombination in ALT (alternative lengthening of telomeres) cell lines and mediates sumoylation of shelterin complex (telosome) components which is proposed to lead to shelterin complex disassembly in ALT-associated PML bodies (APBs). Is involved in positive regulation of response to DNA damage stimulus. This is Non-structural maintenance of chromosomes element 4 homolog A (NSMCE4A) from Homo sapiens (Human).